Reading from the N-terminus, the 100-residue chain is Urease subunit gamma (100 aa).

This sequence belongs to the urease gamma subunit family. Heterotrimer of UreA (gamma), UreB (beta) and UreC (alpha) subunits. Three heterotrimers associate to form the active enzyme.

It is found in the cytoplasm. The catalysed reaction is urea + 2 H2O + H(+) = hydrogencarbonate + 2 NH4(+). Its pathway is nitrogen metabolism; urea degradation; CO(2) and NH(3) from urea (urease route): step 1/1. This is Urease subunit gamma from Ruegeria sp. (strain TM1040) (Silicibacter sp.).